The chain runs to 364 residues: MGAGATGLRGARLSPEERANSSKSRAIDRALSKDHTDDLNRFKILLLGTAESGKSTIFKQMRVLHLDGYAKEDALEYLSIIHSNCMEALTQLVDACTAFGINHDITVQEDVNRFEDFKRKLRDPEGLVIPVVIGRCMDRVWHSPSLQLCYDTRRFRFALLDSAKYFMDNIVRLTEDNYVPSIQDIVHCRISTTGINELAFNYKKMDFKMVDVGGQRSERRKWIHCFDNVDMILFIVSMSDYDQLDPEDNKYNRMKQSYEIFKTIVHSDLFRHASIVLFLNKYDVFVEKLKTSPLRRSFKNYEGDNSEESAREFIKKLFRRCITDRHKFFVFETTATDTGNIDLVFGSAVAHIVNENLRSAGLHE.

Positions 1–29 (MGAGATGLRGARLSPEERANSSKSRAIDR) are disordered. Residue G2 is the site of N-myristoyl glycine attachment. Residues 14 to 29 (SPEERANSSKSRAIDR) show a composition bias toward basic and acidic residues. Residues 40–363 (NRFKILLLGT…NENLRSAGLH (324 aa)) enclose the G-alpha domain. Residues 43–56 (KILLLGTAESGKST) form a G1 motif region. GTP-binding positions include 48–55 (GTAESGKS), 186–192 (VHCRIST), 211–215 (DVGGQ), 280–283 (NKYD), and A335. S55 and T192 together coordinate Mg(2+). Residues 184-192 (DIVHCRIST) are G2 motif. The G3 motif stretch occupies residues 207-216 (FKMVDVGGQR). Positions 276–283 (VLFLNKYD) are G4 motif. The G5 motif stretch occupies residues 333–338 (TTATDT).

This sequence belongs to the G-alpha family. As to quaternary structure, g proteins are composed of 3 units; alpha, beta and gamma. The alpha chain contains the guanine nucleotide binding site.

Functionally, guanine nucleotide-binding proteins (G proteins) are involved as modulators or transducers in various transmembrane signaling systems. In Caenorhabditis elegans, this protein is Guanine nucleotide-binding protein alpha-6 subunit (gpa-6).